The primary structure comprises 119 residues: Ribonuclease P protein component (119 aa).

The protein belongs to the RnpA family. Consists of a catalytic RNA component (M1 or rnpB) and a protein subunit.

The catalysed reaction is Endonucleolytic cleavage of RNA, removing 5'-extranucleotides from tRNA precursor.. Functionally, RNaseP catalyzes the removal of the 5'-leader sequence from pre-tRNA to produce the mature 5'-terminus. It can also cleave other RNA substrates such as 4.5S RNA. The protein component plays an auxiliary but essential role in vivo by binding to the 5'-leader sequence and broadening the substrate specificity of the ribozyme. This Bacillus pumilus (strain SAFR-032) protein is Ribonuclease P protein component.